The primary structure comprises 586 residues: Protein HOL1 (586 aa).

The Extracellular portion of the chain corresponds to 1–66 (MDKYTNRDHP…NWSSWRKLAH (66 aa)). The chain crosses the membrane as a helical span at residues 67–87 (FGLMAFITAFTAATSNDAGAA). Residues 88–103 (QDSLNEIYGISYDSMN) lie on the Cytoplasmic side of the membrane. A helical membrane pass occupies residues 104 to 124 (TGAGVLFLGIGWSTLFLAPFA). The Extracellular segment spans residues 125–130 (NLYGRK). The helical transmembrane segment at 131–151 (ITYIVCTTLGLFGALWFALAK) threads the bilayer. At 152 to 189 (RTSDTIWSQLFVGISESCAEAQVQLSLSDIFFQHQLGS) the chain is on the cytoplasmic side. Residues 190–210 (VLTVYIMCTSIGTFLGPLIAG) traverse the membrane as a helical segment. Topologically, residues 211 to 219 (YISAFTNFR) are extracellular. Residues 220–240 (WVGWVAVIISGGLLITIIFGC) form a helical membrane-spanning segment. Residues 241–362 (EETYFDRGQY…YFKYLKINLR (122 aa)) are Cytoplasmic-facing. Residues 363–383 (MFLFPPVWLSGMFWGIQDVFL) traverse the membrane as a helical segment. At 384–413 (TFYLTTQESAYYEPPWNYSDFGVAIMNVPT) the chain is on the extracellular side. The helical transmembrane segment at 414–434 (LIGAVIGCICAGIVSDYFVLW) threads the bilayer. At 435–448 (MARHNRGILEAEFR) the chain is on the cytoplasmic side. A helical transmembrane segment spans residues 449–469 (LYFSIATAIIGPAGLLMFGIG). Topologically, residues 470–477 (TARQWPWQ) are extracellular. The chain crosses the membrane as a helical span at residues 478–498 (AIYVGLGFVGFAWGCSGDIAM). Over 499-508 (AYLMDCYPDM) the chain is Cytoplasmic. A helical transmembrane segment spans residues 509 to 529 (VLEGMVCTAIINNTISCIFTF). Residues 530–544 (TCSDWLAASGTENTY) are Extracellular-facing. A helical transmembrane segment spans residues 545-565 (IALAVINFGITAFALPMYYYG). The Cytoplasmic portion of the chain corresponds to 566–586 (KRIRLWTKRWYLQSVNLRDGV).

The protein resides in the membrane. Its function is as follows. Seems to be involved in the uptake of several cations and of histidinol. The sequence is that of Protein HOL1 (HOL1) from Saccharomyces cerevisiae (strain ATCC 204508 / S288c) (Baker's yeast).